We begin with the raw amino-acid sequence, 1604 residues long: E3 ubiquitin-protein ligase HECW1 (1604 aa).

One can recognise a C2 domain in the interval 182–318 (SAAPIFKGIG…LERHAIGDRV (137 aa)). Disordered regions lie at residues 350–539 (DEEI…CSLP), 572–604 (PSAQ…LSEV), 642–667 (GIGA…QQGA), and 727–826 (STVF…TIDE). Positions 362-380 (SAETQDSIMNSMVGNSNGE) are enriched in polar residues. Over residues 387–396 (EFCKDAKPES) the composition is skewed to basic and acidic residues. Over residues 398-412 (SEGNGVNSSENQNQE) the composition is skewed to polar residues. Acidic residues-rich tracts occupy residues 435 to 444 (APEEPGELQD) and 458 to 469 (EVAEGLPLDEDS). The segment covering 494–505 (GAREEEMQKGKD) has biased composition (basic and acidic residues). Acidic residues predominate over residues 580–589 (TEEEDGLEEE). Basic and acidic residues predominate over residues 590-601 (STLKESSEKDGL). 3 stretches are compositionally biased toward polar residues: residues 654–667 (STGS…QQGA), 748–762 (DSVQ…STNG), and 803–812 (HNSQPISQLP). In terms of domain architecture, WW 1 spans 826–859 (EPLPPNWEARIDSHGRVFYVDHINRTTTWQRPSM). Serine 871 is modified (phosphoserine). Residues 871–898 (SVHQMEQLNRRYQNIQRTMATERAEEDS) are a coiled coil. The interval 890-936 (ATERAEEDSGNQNSEQIPDGGGGGGGGSDSEAESSQSSLDLRREGSL) is disordered. The span at 908 to 917 (DGGGGGGGGS) shows a compositional bias: gly residues. Phosphoserine is present on residues serine 935 and serine 937. Residues 1016 to 1049 (LELPRGWEIKTDHQGKSFFVDHNSRATTFIDPRI) form the WW 2 domain. The 336-residue stretch at 1269 to 1604 (SRKELQRNKL…VEETSTFGLE (336 aa)) folds into the HECT domain. Cysteine 1572 serves as the catalytic Glycyl thioester intermediate.

Interacts with DVL1 and SSR3. Predominantly expressed in neurons of the spinal cord.

It is found in the cytoplasm. It carries out the reaction S-ubiquitinyl-[E2 ubiquitin-conjugating enzyme]-L-cysteine + [acceptor protein]-L-lysine = [E2 ubiquitin-conjugating enzyme]-L-cysteine + N(6)-ubiquitinyl-[acceptor protein]-L-lysine.. It participates in protein modification; protein ubiquitination. Functionally, E3 ubiquitin-protein ligase that mediates ubiquitination and subsequent degradation of DVL1. This is E3 ubiquitin-protein ligase HECW1 (Hecw1) from Mus musculus (Mouse).